Reading from the N-terminus, the 416-residue chain is Transcription factor PIL1 (416 aa).

Disordered regions lie at residues 1–24, 89–113, and 197–231; these read MEAK…NIKP, VSQS…KLKS, and ESTY…KRST. Low complexity predominate over residues 8 to 22; that stretch reads SSSSEPNMISPSSNI. The stretch at 95–124 forms a coiled coil; the sequence is QQDKETNEQMNNNKKKLKSSKIEFERNVSK. Over residues 216 to 229 the composition is skewed to basic residues; it reads VHARTRKPVTKRKR. The bHLH domain occupies 229 to 278; the sequence is RSTEVHKLYERKRRDEFNKKMRALQDLLPNCYKDDKASLLDEAIKYMRTL.

As to quaternary structure, homodimer. Interacts with APRR1/TOC1. Associates to PTAC12/HMR/PAP5 which acts as a transcriptional coactivator. In terms of tissue distribution, mainly expressed in stems, fruits and flowers and, to a lower extent, in leaves, seedlings and roots. Accumulates in etiolated seedlings.

The protein localises to the nucleus. In terms of biological role, transcription factor. Involved in responses to transient and long-term shade. Required for the light-mediated inhibition of hypocotyl elongation. Necessary for rapid light-induced expression of the photomorphogenesis- and circadian-related gene APRR9. Seems to play a role in multiple PHYB responses, such as flowering transition and petiole elongation. The polypeptide is Transcription factor PIL1 (Arabidopsis thaliana (Mouse-ear cress)).